Consider the following 3416-residue polypeptide: Genome polyprotein (3416 aa).

The tract at residues 1-34 (MAKGAVLKGKGGGPPRRVPKETAKKTRQGPGRLP) is disordered. Over 1–99 (MAKGAVLKGK…NKRRGKRRST (99 aa)) the chain is Cytoplasmic. Positions 97-117 (RSTTGLLTPILLACLATLVFS) are cleaved as a propeptide — ER anchor for the capsid protein C, removed in mature form by serine protease NS3. A helical transmembrane segment spans residues 100-120 (TGLLTPILLACLATLVFSATV). Over 121–243 (RRERTGNMVI…HLTRVEGWVW (123 aa)) the chain is Extracellular. The N-linked (GlcNAc...) asparagine; by host glycan is linked to Asn145. A helical transmembrane segment spans residues 244–261 (KNKFLTAAFCAVVWMVTD). Residue Ser262 is a topological domain, cytoplasmic. Residues 263-281 (LPTRFIVITVALCLAPTYA) form a helical membrane-spanning segment. Topologically, residues 282 to 728 (TRCTHLQNRD…HTAFGAAFNT (447 aa)) are extracellular. Intrachain disulfides connect Cys284/Cys311, Cys341/Cys397, Cys341/Cys402, Cys355/Cys386, Cys373/Cys397, and Cys373/Cys402. Residues 379–392 (DRGWGNHCGLFGKG) form a fusion peptide region. Asn435 carries an N-linked (GlcNAc...) asparagine; by host glycan. Cystine bridges form between Cys467–Cys571 and Cys588–Cys619. The helical transmembrane segment at 729-749 (IFGGVGFLPRILLGVALAWLG) threads the bilayer. Residues 750 to 756 (LNSRNPT) are Cytoplasmic-facing. Residues 757-777 (LSVGFLITGGLVLTMTLGVGA) traverse the membrane as a helical segment. Residues 778–1134 (DMGCAIDANR…RSMVLADNGA (357 aa)) lie on the Extracellular side of the membrane. Disulfide bonds link Cys781–Cys792, Cys832–Cys922, Cys957–Cys1002, Cys1059–Cys1108, Cys1070–Cys1092, and Cys1091–Cys1095. N-linked (GlcNAc...) asparagine; by host glycosylation is found at Asn862, Asn985, and Asn1001. Residues 1135 to 1155 (MLSEGGVPGIVAVFVVLELVI) traverse the membrane as a helical segment. The Lumenal portion of the chain corresponds to 1156 to 1164 (RRRPTTGSS). A helical transmembrane segment spans residues 1165–1185 (VVWCGMVVLGLVVTGLVTIEG). Residues 1186–1189 (LCRY) lie on the Cytoplasmic side of the membrane. A helical transmembrane segment spans residues 1190–1210 (VVAVGILMSMELGPEIVALVL). Over 1211 to 1235 (LQAVFDMRTGLLVAFAVKRAYTTRE) the chain is Lumenal. Residues 1236 to 1256 (AVATYFLLLVLELGFPEASLS) traverse the membrane as a helical segment. Residues 1257–1295 (NIWKWADSLAMGALILQACGQEGRTRVGYLLAAMMTQKD) lie on the Cytoplasmic side of the membrane. A helical membrane pass occupies residues 1296 to 1316 (MVIIHTGLTIFLSAATAMAVW). Topologically, residues 1317–1361 (SMIKGQRDQKGLSWATPLAGLLGGEGVGLRLLAFRKLAERRNRRS) are lumenal. Residues 1362–1379 (FSEPLTVVGVMLTVASGM) form a helical membrane-spanning segment. The Cytoplasmic segment spans residues 1380 to 1384 (VRHTS). A helical membrane pass occupies residues 1385 to 1405 (QEALCALVAGAFLLLMMVLGT). At 1406 to 1456 (RKMQLTAEWCGEVEWNPDLVNEGGEVNLKVRQDAMGNLHLTEVEKEERAMA) the chain is on the lumenal side. The segment at 1412–1451 (AEWCGEVEWNPDLVNEGGEVNLKVRQDAMGNLHLTEVEKE) is interacts with and activates NS3 protease. Residues 1457–1477 (LWLLAGLVASAFHWAGILIVL) constitute an intramembrane region (helical). At 1478–2162 (AVWTLFEMLG…RMAERDAPEA (685 aa)) the chain is on the lumenal side. One can recognise a Peptidase S7 domain in the interval 1492 to 1671 (SELVFSGQET…EAEKSRPEIP (180 aa)). Active-site charge relay system; for serine protease NS3 activity residues include His1545, Asp1569, and Ser1629. The Helicase ATP-binding domain occupies 1677–1833 (TGWMSKGQIT…ESNGAIMSEE (157 aa)). 1690–1697 (MHPGSGKT) provides a ligand contact to ATP. The DEAH box signature appears at 1781–1784 (DEAH). The 159-residue stretch at 1844 to 2002 (GFDWITEYEG…TLRGPVATFY (159 aa)) folds into the Helicase C-terminal domain. An N6-acetyllysine; by host modification is found at Lys1885. A helical transmembrane segment spans residues 2163–2183 (FLTIVEVAVLGVATLGILWCF). The Cytoplasmic segment spans residues 2184-2191 (VARASVSR). The helical intramembrane region spans 2192-2211 (MFLGTVVLFAALFLLWIGGV). Residue Asp2212 is a topological domain, lumenal. A helical transmembrane segment spans residues 2213 to 2233 (YGHMAGIALIFYTLLTVLQPE). At 2234–2246 (PGKQRSSDDNRLA) the chain is on the cytoplasmic side. Residues 2247–2267 (YFLLGLFSLAGLVTANEMGML) form a helical membrane-spanning segment. At 2268-2301 (DKTKADLAGLVWRGEQRHPAWEEWTNVDIQPARS) the chain is on the lumenal side. The helical intramembrane region spans 2302-2322 (WGTYVLIVSLFTPYMLHQLQT). At 2323-2345 (KIQQLVNSSVASGAQAMRDLGGG) the chain is on the lumenal side. Residues 2346 to 2366 (TPFFGVAGHVIALGVTSLVGA) constitute an intramembrane region (helical). At 2367-2368 (TP) the chain is on the lumenal side. The chain crosses the membrane as a helical span at residues 2369 to 2389 (MSLGLGVALAAFHLAIVASGL). The Cytoplasmic segment spans residues 2390–2432 (EAELTQRAHRVFFSAMVKNPMVDGDVINPFPDGETKPALYERR). A helical membrane pass occupies residues 2433–2453 (MSLILAIALCMGSVVLNRTAA). The Lumenal segment spans residues 2454-2476 (SMTEAGAVGLAALGQLVHPETET). Residues 2477–2497 (LWTMPMACGMAGLVRGSFWGL) form a helical membrane-spanning segment. The Cytoplasmic portion of the chain corresponds to 2498 to 3416 (LPMGHRLWLR…WDLKLESNII (919 aa)). The region spanning 2514–2778 (GGAEGETLGD…EVDLGTGTRC (265 aa)) is the mRNA cap 0-1 NS5-type MT domain. Ser2569 lines the S-adenosyl-L-methionine pocket. Ser2569 carries the phosphoserine modification. The active-site For 2'-O-MTase activity is the Lys2574. Positions 2599, 2600, 2617, 2618, 2644, and 2645 each coordinate S-adenosyl-L-methionine. Residue Asp2659 is the For 2'-O-MTase activity of the active site. Ile2660 contributes to the S-adenosyl-L-methionine binding site. Residues Lys2696 and Glu2732 each act as for 2'-O-MTase activity in the active site. Positions 2732-2736 (EMYFS) are interaction with host SCRIB. Residue Tyr2734 participates in S-adenosyl-L-methionine binding. Zn(2+) contacts are provided by Glu2952, His2956, Cys2961, and Cys2964. The RdRp catalytic domain occupies 3042–3191 (GLFYADDTAG…RPIDDRFGKA (150 aa)). Residues His3226, Cys3242, and Cys3361 each contribute to the Zn(2+) site.

In the N-terminal section; belongs to the class I-like SAM-binding methyltransferase superfamily. mRNA cap 0-1 NS5-type methyltransferase family. In terms of assembly, homodimer. Interacts (via N-terminus) with host EXOC1 (via C-terminus); this interaction results in EXOC1 degradation through the proteasome degradation pathway. As to quaternary structure, forms heterodimers with envelope protein E in the endoplasmic reticulum and Golgi. Homodimer; in the endoplasmic reticulum and Golgi. Interacts with protein prM. Interacts with non-structural protein 1. In terms of assembly, homodimer; Homohexamer when secreted. Interacts with envelope protein E. NS1 interacts with NS4B. Interacts with host complement protein CFH; this interaction leads to the degradation of C3. As to quaternary structure, interacts (via N-terminus) with serine protease NS3. Forms a heterodimer with serine protease NS3. May form homooligomers. In terms of assembly, forms a heterodimer with NS2B. Interacts with non-structural protein 2A (via N-terminus). Interacts with NS4B. Interacts with unphosphorylated RNA-directed RNA polymerase NS5; this interaction stimulates RNA-directed RNA polymerase NS5 guanylyltransferase activity. As to quaternary structure, interacts with serine protease NS3. Homodimer. Interacts with host STAT2; this interaction inhibits the phosphorylation of the latter, and, when all viral proteins are present (polyprotein), targets STAT2 for degradation. Interacts with serine protease NS3. Post-translationally, specific enzymatic cleavages in vivo yield mature proteins. Cleavages in the lumen of endoplasmic reticulum are performed by host signal peptidase, whereas cleavages in the cytoplasmic side are performed by serine protease NS3. Signal cleavage at the 2K-4B site requires a prior NS3 protease-mediated cleavage at the 4A-2K site. In terms of processing, cleaved in post-Golgi vesicles by a host furin, releasing the mature small envelope protein M, and peptide pr. This cleavage is incomplete as up to 30% of viral particles still carry uncleaved prM. N-glycosylated. Post-translationally, N-glycosylated. The excreted form is glycosylated and this is required for efficient secretion of the protein from infected cells. In terms of processing, acetylated by host KAT5. Acetylation modulates NS3 RNA-binding and unwinding activities and plays an important positive role for viral replication. Phosphorylated on serines residues. This phosphorylation may trigger NS5 nuclear localization.

It is found in the virion. The protein resides in the host nucleus. The protein localises to the host cytoplasm. It localises to the host perinuclear region. Its subcellular location is the secreted. It is found in the virion membrane. The protein resides in the host endoplasmic reticulum membrane. The catalysed reaction is Selective hydrolysis of -Xaa-Xaa-|-Yaa- bonds in which each of the Xaa can be either Arg or Lys and Yaa can be either Ser or Ala.. The enzyme catalyses RNA(n) + a ribonucleoside 5'-triphosphate = RNA(n+1) + diphosphate. It carries out the reaction a ribonucleoside 5'-triphosphate + H2O = a ribonucleoside 5'-diphosphate + phosphate + H(+). It catalyses the reaction ATP + H2O = ADP + phosphate + H(+). The catalysed reaction is a 5'-end (5'-triphosphoguanosine)-ribonucleoside in mRNA + S-adenosyl-L-methionine = a 5'-end (N(7)-methyl 5'-triphosphoguanosine)-ribonucleoside in mRNA + S-adenosyl-L-homocysteine. The enzyme catalyses a 5'-end (N(7)-methyl 5'-triphosphoguanosine)-ribonucleoside in mRNA + S-adenosyl-L-methionine = a 5'-end (N(7)-methyl 5'-triphosphoguanosine)-(2'-O-methyl-ribonucleoside) in mRNA + S-adenosyl-L-homocysteine + H(+). In terms of biological role, plays a role in virus budding by binding to the cell membrane and gathering the viral RNA into a nucleocapsid that forms the core of a mature virus particle. During virus entry, may induce genome penetration into the host cytoplasm after hemifusion induced by the surface proteins. Can migrate to the cell nucleus where it modulates host functions. Functionally, inhibits RNA silencing by interfering with host Dicer. Its function is as follows. Prevents premature fusion activity of envelope proteins in trans-Golgi by binding to envelope protein E at pH6.0. After virion release in extracellular space, gets dissociated from E dimers. Acts as a chaperone for envelope protein E during intracellular virion assembly by masking and inactivating envelope protein E fusion peptide. prM is the only viral peptide matured by host furin in the trans-Golgi network probably to avoid catastrophic activation of the viral fusion activity in acidic Golgi compartment prior to virion release. prM-E cleavage is inefficient, and many virions are only partially matured. These uncleaved prM would play a role in immune evasion. In terms of biological role, may play a role in virus budding. Exerts cytotoxic effects by activating a mitochondrial apoptotic pathway through M ectodomain. May display a viroporin activity. Functionally, binds to host cell surface receptor and mediates fusion between viral and cellular membranes. Envelope protein is synthesized in the endoplasmic reticulum in the form of heterodimer with protein prM. They play a role in virion budding in the ER, and the newly formed immature particle is covered with 60 spikes composed of heterodimer between precursor prM and envelope protein E. The virion is transported to the Golgi apparatus where the low pH causes dissociation of PrM-E heterodimers and formation of E homodimers. prM-E cleavage is inefficient, and many virions are only partially matured. These uncleaved prM would play a role in immune evasion. Its function is as follows. Involved in immune evasion, pathogenesis and viral replication. Once cleaved off the polyprotein, is targeted to three destinations: the viral replication cycle, the plasma membrane and the extracellular compartment. Essential for viral replication. Required for formation of the replication complex and recruitment of other non-structural proteins to the ER-derived membrane structures. Excreted as a hexameric lipoparticle that plays a role against host immune response. Antagonizing the complement function. Binds to the host macrophages and dendritic cells. Inhibits signal transduction originating from Toll-like receptor 3 (TLR3). Component of the viral RNA replication complex that functions in virion assembly and antagonizes the host immune response. In terms of biological role, required cofactor for the serine protease function of NS3. May have membrane-destabilizing activity and form viroporins. Functionally, displays three enzymatic activities: serine protease, NTPase and RNA helicase. NS3 serine protease, in association with NS2B, performs its autocleavage and cleaves the polyprotein at dibasic sites in the cytoplasm: C-prM, NS2A-NS2B, NS2B-NS3, NS3-NS4A, NS4A-2K and NS4B-NS5. NS3 RNA helicase binds RNA and unwinds dsRNA in the 3' to 5' direction. Its function is as follows. Regulates the ATPase activity of the NS3 helicase activity. NS4A allows NS3 helicase to conserve energy during unwinding. Functions as a signal peptide for NS4B and is required for the interferon antagonism activity of the latter. In terms of biological role, induces the formation of ER-derived membrane vesicles where the viral replication takes place. Inhibits interferon (IFN)-induced host STAT1 phosphorylation and nuclear translocation, thereby preventing the establishment of cellular antiviral state by blocking the IFN-alpha/beta pathway. Inhibits STAT2 translocation in the nucleus after IFN-alpha treatment. Functionally, replicates the viral (+) and (-) RNA genome, and performs the capping of genomes in the cytoplasm. NS5 methylates viral RNA cap at guanine N-7 and ribose 2'-O positions. Besides its role in RNA genome replication, also prevents the establishment of cellular antiviral state by blocking the interferon-alpha/beta (IFN-alpha/beta) signaling pathway. Inhibits host TYK2 and STAT2 phosphorylation, thereby preventing activation of JAK-STAT signaling pathway. This chain is Genome polyprotein, found in Homo sapiens (Human).